The following is a 415-amino-acid chain: Serine hydroxymethyltransferase (415 aa).

(6S)-5,6,7,8-tetrahydrofolate contacts are provided by residues L117 and G121 to L123. Residue K226 is modified to N6-(pyridoxal phosphate)lysine.

Belongs to the SHMT family. As to quaternary structure, homodimer. The cofactor is pyridoxal 5'-phosphate.

The protein resides in the cytoplasm. It carries out the reaction (6R)-5,10-methylene-5,6,7,8-tetrahydrofolate + glycine + H2O = (6S)-5,6,7,8-tetrahydrofolate + L-serine. The protein operates within one-carbon metabolism; tetrahydrofolate interconversion. Its pathway is amino-acid biosynthesis; glycine biosynthesis; glycine from L-serine: step 1/1. Catalyzes the reversible interconversion of serine and glycine with tetrahydrofolate (THF) serving as the one-carbon carrier. This reaction serves as the major source of one-carbon groups required for the biosynthesis of purines, thymidylate, methionine, and other important biomolecules. Also exhibits THF-independent aldolase activity toward beta-hydroxyamino acids, producing glycine and aldehydes, via a retro-aldol mechanism. The protein is Serine hydroxymethyltransferase of Leptospira interrogans serogroup Icterohaemorrhagiae serovar copenhageni (strain Fiocruz L1-130).